Consider the following 2715-residue polypeptide: Cilia- and flagella-associated protein 46 (2715 aa).

TPR repeat units follow at residues 89–122 (CRAQMCAPKSAENLEEFENCVTEYMKAINFAKGE), 175–208 (AELMLELLECYLQAGRKEEAARFCSTAAPFIKSH), 261–295 (GDISVILRKAYRHLGHYNHQRFPSISEEKMLLLFE), 324–359 (PGKLIEMECLECESEALRLESKMKVYNRAAVEAQLD), 426–459 (CQVHMEMAQIEEDEDRLEPATEHLRKAARLDSLG), 469–503 (STRLRLCTTLYQAPERAEDKAIMAVEQAKKATPKD), 807–845 (SRKFMRPNAFHSPLDAGATSEIKTAVEVCEFALNLTNGS), 936–969 (LQTLTRLTHFAHAARDHETTMACAHRALEMGIKY), 1111–1144 (AALYGLLFHSHADQDDWEGGLKVLDEAVQVLPRT), and 1174–1211 (AESEDYLARMWHRLALNSPSVSGELACYNNAIQALQKP). Positions 1356–1412 (SHLLLPKKEKENERSKEKEKERSKEKENERSKEKDKEKGKEEKVKEPKQSQSPAPIK) are disordered. The segment covering 1361–1403 (PKKEKENERSKEKEKERSKEKENERSKEKDKEKGKEEKVKEPK) has biased composition (basic and acidic residues). Residues 1362–1401 (KKEKENERSKEKEKERSKEKENERSKEKDKEKGKEEKVKE) are a coiled coil. One copy of the TPR 11 repeat lies at 1639–1672 (AQCLLLLAQLANKEKNYGQAKKMIAQAQHLGGSE). Positions 1781–1810 (VDVKLERAKIKRLRAQNEKDEEQKTAYYLE) form a coiled coil. 3 disordered regions span residues 2000–2023 (EEEGATKSSRDPPASRAAPEEHCR), 2294–2319 (AVVADSGKSKGKDKERKTSTGQHSTV), and 2371–2399 (ETEGGVKKEGRSRDPKKRSLAKKGRKGSI). 2 stretches are compositionally biased toward basic and acidic residues: residues 2300-2311 (GKSKGKDKERKT) and 2371-2383 (ETEGGVKKEGRSR). Residues 2384 to 2398 (DPKKRSLAKKGRKGS) show a composition bias toward basic residues. TPR repeat units follow at residues 2399–2432 (IPRTIPPDCIIVDSDNFKFVVDPYEEAQGPEMLT) and 2504–2537 (VAVLLDLARSYQSLKRHMESVEHRRSVGRWEANW). A disordered region spans residues 2541 to 2567 (ASPSEDEWRRGGEPRRGFSDLEGQAAA). The span at 2546-2559 (DEWRRGGEPRRGFS) shows a compositional bias: basic and acidic residues.

The protein belongs to the CFAP46 family.

The protein resides in the cytoplasm. The protein localises to the cytoskeleton. It is found in the cilium axoneme. As part of the central apparatus of the cilium axoneme plays a role in cilium movement. This Homo sapiens (Human) protein is Cilia- and flagella-associated protein 46.